A 294-amino-acid chain; its full sequence is Putative sugar lactone lactonase (294 aa).

A divalent metal cation contacts are provided by E21, N150, and D201. D201 acts as the Proton donor/acceptor in catalysis.

It belongs to the SMP-30/CGR1 family. A divalent metal cation serves as cofactor.

Involved in the degradation of galactose via the DeLey-Doudoroff pathway. This Rhizobium meliloti (strain 1021) (Ensifer meliloti) protein is Putative sugar lactone lactonase.